Consider the following 466-residue polypeptide: Probable Xaa-Pro aminopeptidase pepP (466 aa).

D264, D275, E398, and E438 together coordinate Mn(2+).

Belongs to the peptidase M24B family. Mn(2+) is required as a cofactor.

The catalysed reaction is Release of any N-terminal amino acid, including proline, that is linked to proline, even from a dipeptide or tripeptide.. Its function is as follows. Catalyzes the removal of a penultimate prolyl residue from the N-termini of peptides. The sequence is that of Probable Xaa-Pro aminopeptidase pepP (pepP) from Aspergillus clavatus (strain ATCC 1007 / CBS 513.65 / DSM 816 / NCTC 3887 / NRRL 1 / QM 1276 / 107).